We begin with the raw amino-acid sequence, 351 residues long: Holliday junction branch migration complex subunit RuvB (351 aa).

Residues Met-1–Tyr-186 form a large ATPase domain (RuvB-L) region. Residues Ile-25, Arg-26, Gly-67, Lys-70, Thr-71, Thr-72, Glu-133–Phe-135, Arg-176, Tyr-186, and Arg-223 each bind ATP. Thr-71 is a Mg(2+) binding site. The interval Arg-187–Asn-257 is small ATPAse domain (RuvB-S). Residues Ile-260 to Glu-351 form a head domain (RuvB-H) region. 3 residues coordinate DNA: Arg-296, Arg-315, and Arg-320.

This sequence belongs to the RuvB family. Homohexamer. Forms an RuvA(8)-RuvB(12)-Holliday junction (HJ) complex. HJ DNA is sandwiched between 2 RuvA tetramers; dsDNA enters through RuvA and exits via RuvB. An RuvB hexamer assembles on each DNA strand where it exits the tetramer. Each RuvB hexamer is contacted by two RuvA subunits (via domain III) on 2 adjacent RuvB subunits; this complex drives branch migration. In the full resolvosome a probable DNA-RuvA(4)-RuvB(12)-RuvC(2) complex forms which resolves the HJ.

It is found in the cytoplasm. The enzyme catalyses ATP + H2O = ADP + phosphate + H(+). Its function is as follows. The RuvA-RuvB-RuvC complex processes Holliday junction (HJ) DNA during genetic recombination and DNA repair, while the RuvA-RuvB complex plays an important role in the rescue of blocked DNA replication forks via replication fork reversal (RFR). RuvA specifically binds to HJ cruciform DNA, conferring on it an open structure. The RuvB hexamer acts as an ATP-dependent pump, pulling dsDNA into and through the RuvAB complex. RuvB forms 2 homohexamers on either side of HJ DNA bound by 1 or 2 RuvA tetramers; 4 subunits per hexamer contact DNA at a time. Coordinated motions by a converter formed by DNA-disengaged RuvB subunits stimulates ATP hydrolysis and nucleotide exchange. Immobilization of the converter enables RuvB to convert the ATP-contained energy into a lever motion, pulling 2 nucleotides of DNA out of the RuvA tetramer per ATP hydrolyzed, thus driving DNA branch migration. The RuvB motors rotate together with the DNA substrate, which together with the progressing nucleotide cycle form the mechanistic basis for DNA recombination by continuous HJ branch migration. Branch migration allows RuvC to scan DNA until it finds its consensus sequence, where it cleaves and resolves cruciform DNA. This Coxiella burnetii (strain CbuG_Q212) (Coxiella burnetii (strain Q212)) protein is Holliday junction branch migration complex subunit RuvB.